A 565-amino-acid polypeptide reads, in one-letter code: Efflux pump aunC (565 aa).

Residues 1–14 (MSDTARISGGSFTS) are compositionally biased toward polar residues. Positions 1 to 57 (MSDTARISGGSFTSPPGRDVELNSFKEASQTRLYPYSSRKEEEGREDEQQRPEREED) are disordered. Over residues 38–54 (SRKEEEGREDEQQRPER) the composition is skewed to basic and acidic residues. 14 helical membrane passes run 59–79 (GALT…CIFC), 103–123 (DVGW…LPFG), 128–148 (FFPI…GSFI), 164–184 (VAGL…TQCV), 194–214 (GFIM…GGAF), 222–242 (WCFY…FFTF), 257–277 (AAGL…CLLL), 293–313 (IIAL…LQLW), 335–355 (LYGF…PIWF), 378–398 (VIFA…GPFM), 399–419 (LLSA…HPSS), 425–445 (IGYQ…PVFV), 457–477 (TATA…VSVA), and 530–550 (VHTF…ATVI).

It belongs to the major facilitator superfamily. TCR/Tet family.

It is found in the cell membrane. In terms of biological role, efflux pump; part of the gene cluster that mediates the biosynthesis of aurasperone B, a dimeric gamma-naphthopyrone. The protein is Efflux pump aunC of Aspergillus niger (strain ATCC MYA-4892 / CBS 513.88 / FGSC A1513).